A 1211-amino-acid polypeptide reads, in one-letter code: Transient receptor potential cation channel subfamily A member 1 homolog (1211 aa).

At 1-811 (MSKKSLGLDV…LKYKWNRLGR (811 aa)) the chain is on the cytoplasmic side. ANK repeat units lie at residues 49–79 (NLRSIIHQSAREGNVNALQEALLKAPLAVNA), 83–112 (DFMTPLHYAARYGNYDAVKLLLSKNALPNT), 116–169 (EGDT…EIDP), 173–202 (YQLTPLHYAAMKSNFSALHALIKLKADVDA), 206–235 (NKMTPLLLACVHGSQEIIQELIKANSNVTK), 239–270 (RLNTVFHIVALRGEPEYLEMMMDHDPVEAIKA), 277–306 (EKKTPLRMAVEGNHPETLKKILQMEKKNSC), 311–340 (REKELIHFAAEKGFLEVLKALVEAGGNKNE), 344–374 (VKAVPLHVAAQMNQLEVVSYLIEEEKDNIDV), 378–407 (QGLTPLMMAVTHDSKKCVEYLIAKKANLTI), 411–440 (DERTPVFIGAKFNALSSVEYILDHLRKKNK), 473–502 (DQNTPMHIVASNGYLEMMQLLQKHGASITQ), 506–535 (DEETALHRAAIGGQTGAVRQLLEWDIRLLL), 540–569 (MGNSALHLAARSGHDATTKVLLDNGADKEA), 573–602 (YQKTPLQVAVDSGKLETCQRLVAKGAQIES), 605–634 (DTKTVLHTAAFYGNESIVRYFIAEGVTIDR), and 638–669 (EGKTAFDIACENDHKDVARAFLETDQWKNLMI). A helical transmembrane segment spans residues 812–832 (PMYYFALFMYLVFIVSLTQYV). The Extracellular segment spans residues 833 to 870 (RHTKAPYNVWNEESYYDSEYFDENETCPQINTTKPDVV). N-linked (GlcNAc...) asparagine glycans are attached at residues Asn856 and Asn863. Residues 871–891 (WKIIIQTLAVCQILVECFQLF) form a helical membrane-spanning segment. The Cytoplasmic portion of the chain corresponds to 892-894 (QRK). A helical transmembrane segment spans residues 895–915 (FAYLVNWENWIDCFIYSTALI). The Extracellular segment spans residues 916–932 (TVYDFSECSATSGVRQN). The chain crosses the membrane as a helical span at residues 933-953 (WQWILAALCIFFGWINLLFMI). Topologically, residues 954 to 975 (RKMPRFGIFVVMFVDIVKTFFR) are cytoplasmic. A helical membrane pass occupies residues 976-996 (FFPVFVLFIIAFSSSFYVILQ). Over 997-1004 (NRPEFSTI) the chain is Extracellular. The pore-forming intramembrane region spans 1005–1025 (FMSPLKTTVMMIGEFEFTGIF). At 1026 to 1048 (HGDETTHAEKMFGPAHTAVACAL) the chain is on the extracellular side. A helical transmembrane segment spans residues 1049–1069 (FFFFCIIMTILLMNLLVGLAV). The Cytoplasmic portion of the chain corresponds to 1070 to 1193 (DDIKGVQEKA…EKQVRLEAII (124 aa)). Residues 1149-1191 (EMYEREAEFTSEMTQKLQNQAAKLKNIQENIDVMYEKQVRLEA) are a coiled coil.

Belongs to the transient receptor (TC 1.A.4) family. In terms of assembly, homotetramer. Expressed in many sensory neurons, including OLQ and IL1 neurons.

Its subcellular location is the cell membrane. In terms of biological role, receptor-activated non-selective cation channel involved in the nose-touch response and foraging behavior. Contributes to the neural responses of sensory neurons to touch, particularly after repeated mechanical stimulation. Has no apparent role in thermosensory or chemosensory behaviors. This is Transient receptor potential cation channel subfamily A member 1 homolog (trpa-1) from Caenorhabditis elegans.